The sequence spans 175 residues: RNA pyrophosphohydrolase (175 aa).

In terms of domain architecture, Nudix hydrolase spans 6 to 149; that stretch reads GYRPNVGIVI…KRDVYRRVMK (144 aa). Residues 38–59 carry the Nudix box motif; that stretch reads GGINPGETAEQAMYRELFEEVG.

The protein belongs to the Nudix hydrolase family. RppH subfamily. The cofactor is a divalent metal cation.

Its function is as follows. Accelerates the degradation of transcripts by removing pyrophosphate from the 5'-end of triphosphorylated RNA, leading to a more labile monophosphorylated state that can stimulate subsequent ribonuclease cleavage. The sequence is that of RNA pyrophosphohydrolase from Erwinia tasmaniensis (strain DSM 17950 / CFBP 7177 / CIP 109463 / NCPPB 4357 / Et1/99).